Reading from the N-terminus, the 223-residue chain is Serum amyloid P-component (223 aa).

The signal sequence occupies residues 1–19; sequence MNKPLLWISVLTSLLEAFA. Residues 24-223 enclose the Pentraxin (PTX) domain; the sequence is SGKVFVFPRE…YVIIKPLVWV (200 aa). N51 carries N-linked (GlcNAc...) asparagine glycosylation. Residues C55 and C114 are joined by a disulfide bond. Positions 77, 78, 155, 156, 157, and 167 each coordinate Ca(2+).

It belongs to the pentraxin family. As to quaternary structure, homopentamer. Pentraxin (or pentaxin) have a discoid arrangement of 5 non-covalently bound subunits. It depends on Ca(2+) as a cofactor. N-glycosylated with a complex biantennary oligosaccharide chain with a sialic acid at the end (disialo-SAP). Monosialo-SAP as well as asioalo-SAP are also detected. Found in serum and urine.

Its subcellular location is the secreted. Can interact with DNA and histones and may scavenge nuclear material released from damaged circulating cells. May also function as a calcium-dependent lectin. This chain is Serum amyloid P-component (APCS), found in Homo sapiens (Human).